The sequence spans 101 residues: Secreted RxLR effector protein 64 (101 aa).

A signal peptide spans 1–23; the sequence is MMSPPMTTTLMFILNYAIISFHG. The RxLR motif lies at 48 to 51; that stretch reads RELR. Residues 67-87 traverse the membrane as a helical segment; sequence LQPILPLPLCLPFPLVPASIF.

The protein belongs to the RxLR effector family.

The protein localises to the secreted. It localises to the host cytoplasm. The protein resides in the host nucleus. It is found in the membrane. Its function is as follows. Effector that acts as a broad suppressor of cell death to interrupt plant immunity. Inhibits cell death induced by cell death-inducing proteins, including the PAMP elicitor INF1 from P.infestans. In Plasmopara viticola (Downy mildew of grapevine), this protein is Secreted RxLR effector protein 64.